The chain runs to 464 residues: Isthmin-1 (464 aa).

An N-terminal signal peptide occupies residues 1-29; the sequence is MVRLAAELLLLLGLLLLTLHITVLRGSGA. Asparagine 39 carries an N-linked (GlcNAc...) asparagine glycan. 3 disordered regions span residues 50–98, 135–155, and 173–219; these read NVGS…LQRD, PDSE…SVPS, and SGDQ…STDG. Residues 51 to 63 are compositionally biased toward polar residues; the sequence is VGSDTTSETSFSL. Basic and acidic residues-rich tracts occupy residues 66 to 76 and 138 to 147; these read EAPREHLDHQA and EADKDQHPEN. The 45-residue stretch at 218–262 folds into the TSP type-1 domain; it reads DGEGDWSLWSVCSVTCGNGNQKRTRSCGYACTATESRTCDRPNCP. 3 disulfides stabilise this stretch: cysteine 229-cysteine 256, cysteine 233-cysteine 261, and cysteine 244-cysteine 248. The AMOP domain maps to 289–452; sequence LFEVDTDSCE…QKCTESPSDE (164 aa).

Belongs to the isthmin family. As to quaternary structure, interacts with integrin ITGAV/ITGB5.

The protein localises to the secreted. Functionally, acts as an angiogenesis inhibitor. In Homo sapiens (Human), this protein is Isthmin-1 (ISM1).